A 113-amino-acid polypeptide reads, in one-letter code: Hydrogenase maturation factor HypA (113 aa).

Ni(2+) is bound at residue histidine 2. Positions 73, 76, 89, and 92 each coordinate Zn(2+).

Belongs to the HypA/HybF family.

Its function is as follows. Involved in the maturation of [NiFe] hydrogenases. Required for nickel insertion into the metal center of the hydrogenase. The sequence is that of Hydrogenase maturation factor HypA from Azotobacter vinelandii.